The following is a 1791-amino-acid chain: Protein TIC 214 (1791 aa).

A run of 6 helical transmembrane segments spans residues 19 to 39 (IINS…FSIG), 68 to 88 (FIAG…HLAL), 91 to 111 (PHTI…WNNH), 133 to 153 (VFLN…SSML), 176 to 196 (VGWL…LVWI), and 227 to 247 (IFSI…PSPI). The interval 1492–1511 (ASQVELESDKENKKNPESAL) is disordered. The segment covering 1498 to 1511 (ESDKENKKNPESAL) has biased composition (basic and acidic residues).

This sequence belongs to the TIC214 family. In terms of assembly, part of the Tic complex.

It localises to the plastid. It is found in the chloroplast inner membrane. Involved in protein precursor import into chloroplasts. May be part of an intermediate translocation complex acting as a protein-conducting channel at the inner envelope. In Barbarea verna (Land cress), this protein is Protein TIC 214.